Consider the following 353-residue polypeptide: Photosystem II protein D1 (353 aa).

Thr-2 is modified (N-acetylthreonine). The residue at position 2 (Thr-2) is a Phosphothreonine. A run of 3 helical transmembrane segments spans residues 29 to 46 (YIGWFGVLMIPTLLTATS), 118 to 133 (HFLLGVACYMGREWEL), and 142 to 156 (WIAVAYSAPVAAATA). Residue His-118 participates in chlorophyll a binding. Tyr-126 is a binding site for pheophytin a. 2 residues coordinate [CaMn4O5] cluster: Asp-170 and Glu-189. A helical membrane pass occupies residues 197 to 218 (FHMLGVAGVFGGSLFSAMHGSL). His-198 is a chlorophyll a binding site. A quinone-binding positions include His-215 and 264–265 (SF). His-215 lines the Fe cation pocket. His-272 lines the Fe cation pocket. A helical transmembrane segment spans residues 274-288 (FLAAWPVVGIWFTAL). Positions 332, 333, 342, and 344 each coordinate [CaMn4O5] cluster. Positions 345-353 (AVEVPAING) are excised as a propeptide.

Belongs to the reaction center PufL/M/PsbA/D family. As to quaternary structure, PSII is composed of 1 copy each of membrane proteins PsbA, PsbB, PsbC, PsbD, PsbE, PsbF, PsbH, PsbI, PsbJ, PsbK, PsbL, PsbM, PsbT, PsbX, PsbY, PsbZ, Psb30/Ycf12, at least 3 peripheral proteins of the oxygen-evolving complex and a large number of cofactors. It forms dimeric complexes. The D1/D2 heterodimer binds P680, chlorophylls that are the primary electron donor of PSII, and subsequent electron acceptors. It shares a non-heme iron and each subunit binds pheophytin, quinone, additional chlorophylls, carotenoids and lipids. D1 provides most of the ligands for the Mn4-Ca-O5 cluster of the oxygen-evolving complex (OEC). There is also a Cl(-1) ion associated with D1 and D2, which is required for oxygen evolution. The PSII complex binds additional chlorophylls, carotenoids and specific lipids. serves as cofactor. In terms of processing, tyr-161 forms a radical intermediate that is referred to as redox-active TyrZ, YZ or Y-Z. C-terminally processed by CTPA; processing is essential to allow assembly of the oxygen-evolving complex and thus photosynthetic growth.

The protein resides in the plastid. It localises to the chloroplast thylakoid membrane. The enzyme catalyses 2 a plastoquinone + 4 hnu + 2 H2O = 2 a plastoquinol + O2. Its function is as follows. Photosystem II (PSII) is a light-driven water:plastoquinone oxidoreductase that uses light energy to abstract electrons from H(2)O, generating O(2) and a proton gradient subsequently used for ATP formation. It consists of a core antenna complex that captures photons, and an electron transfer chain that converts photonic excitation into a charge separation. The D1/D2 (PsbA/PsbD) reaction center heterodimer binds P680, the primary electron donor of PSII as well as several subsequent electron acceptors. The polypeptide is Photosystem II protein D1 (Hordeum vulgare (Barley)).